Consider the following 145-residue polypeptide: LIM domain only protein 3 (145 aa).

LIM zinc-binding domains follow at residues 11–73 (KGCA…LFGV) and 75–137 (GNCA…GLMK).

This Danio rerio (Zebrafish) protein is LIM domain only protein 3.